A 248-amino-acid polypeptide reads, in one-letter code: ATP synthase subunit a (248 aa).

5 helical membrane-spanning segments follow: residues 31-51, 90-110, 129-149, 195-215, and 216-236; these read GQVLIASWIAIALILTVVILG, VPYVGTLFLFIFVSNWMGNLF, INTTAGLALLTSIMYFVAGIS, VIAVLVLLVPLFIPVPVMVLF, and LFTGAIQALIFSTLSAAYIGE.

Belongs to the ATPase A chain family. F-type ATPases have 2 components, CF(1) - the catalytic core - and CF(0) - the membrane proton channel. CF(1) has five subunits: alpha(3), beta(3), gamma(1), delta(1), epsilon(1). CF(0) has four main subunits: a, b, b' and c.

It is found in the cellular thylakoid membrane. Key component of the proton channel; it plays a direct role in the translocation of protons across the membrane. The protein is ATP synthase subunit a of Synechococcus sp. (strain JA-2-3B'a(2-13)) (Cyanobacteria bacterium Yellowstone B-Prime).